Reading from the N-terminus, the 144-residue chain is MAASKVKQDMPPPGGYGPIDYKRNLPRRGLSGYSMLAIGIGTLIYGHWSIMKWNRERRRLQIEDFEARIALLPLLQAETDRRTLQMLRENLEEEAIIMKDVPDWKVGESVFHTTRWVPPLIGELYGLRTTEEALHASHGFMWYM.

A2 is subject to N-acetylalanine. Residues 30–51 (LSGYSMLAIGIGTLIYGHWSIM) traverse the membrane as a helical segment.

It belongs to the complex I NDUFA13 subunit family. In terms of assembly, complex I is composed of 45 different subunits. Interacts with CARD15, but not with CARD4. Interacts with STAT3, but not with STAT1, STAT2 and STAT5A. Interacts with OLFM4.

It is found in the mitochondrion inner membrane. The protein resides in the nucleus. Functionally, accessory subunit of the mitochondrial membrane respiratory chain NADH dehydrogenase (Complex I), that is believed not to be involved in catalysis. Complex I functions in the transfer of electrons from NADH to the respiratory chain. The immediate electron acceptor for the enzyme is believed to be ubiquinone. Involved in the interferon/all-trans-retinoic acid (IFN/RA) induced cell death. This apoptotic activity is inhibited by interaction with viral IRF1. Prevents the transactivation of STAT3 target genes. May play a role in CARD15-mediated innate mucosal responses and serve to regulate intestinal epithelial cell responses to microbes. This chain is NADH dehydrogenase [ubiquinone] 1 alpha subcomplex subunit 13 (NDUFA13), found in Pan troglodytes (Chimpanzee).